Reading from the N-terminus, the 362-residue chain is 3-dehydroquinate synthase (362 aa).

Residues 71–76, 105–109, 129–130, lysine 142, and lysine 151 each bind NAD(+); these read DGEQNK, GVIGD, and TT. Zn(2+) is bound by residues glutamate 184, histidine 247, and histidine 264.

The protein belongs to the sugar phosphate cyclases superfamily. Dehydroquinate synthase family. The cofactor is Co(2+). Requires Zn(2+) as cofactor. NAD(+) is required as a cofactor.

It localises to the cytoplasm. It catalyses the reaction 7-phospho-2-dehydro-3-deoxy-D-arabino-heptonate = 3-dehydroquinate + phosphate. It participates in metabolic intermediate biosynthesis; chorismate biosynthesis; chorismate from D-erythrose 4-phosphate and phosphoenolpyruvate: step 2/7. Its function is as follows. Catalyzes the conversion of 3-deoxy-D-arabino-heptulosonate 7-phosphate (DAHP) to dehydroquinate (DHQ). The protein is 3-dehydroquinate synthase of Blochmanniella pennsylvanica (strain BPEN).